Consider the following 868-residue polypeptide: Leucine--tRNA ligase (868 aa).

Positions 42–52 (PYPSGKLHMGH) match the 'HIGH' region motif. The 'KMSKS' region motif lies at 627 to 631 (KMSKS). K630 contributes to the ATP binding site.

This sequence belongs to the class-I aminoacyl-tRNA synthetase family.

It is found in the cytoplasm. It carries out the reaction tRNA(Leu) + L-leucine + ATP = L-leucyl-tRNA(Leu) + AMP + diphosphate. The protein is Leucine--tRNA ligase of Pseudomonas putida (strain ATCC 47054 / DSM 6125 / CFBP 8728 / NCIMB 11950 / KT2440).